The sequence spans 246 residues: Large ribosomal subunit protein uL4 (246 aa).

Positions 37-103 (AAQANRKQDY…TEKDRSLDLN (67 aa)) are disordered. Basic and acidic residues predominate over residues 92 to 103 (PKTEKDRSLDLN).

Belongs to the universal ribosomal protein uL4 family. Part of the 50S ribosomal subunit. Interacts weakly with proteins L18e, L24 and L37e. Has been cross-linked to L18e.

Its function is as follows. One of the primary rRNA binding proteins, this protein initially binds near the 5'-end of the 23S rRNA. It is important during the early stages of 50S assembly. Functionally, makes multiple contacts with different domains of the 23S rRNA in the assembled 50S subunit. Forms part of the polypeptide exit tunnel, in which it helps forms a bend with protein L22. Contacts the macrolide antibiotic spiramycin in the polypeptide exit tunnel. The chain is Large ribosomal subunit protein uL4 (rpl4) from Haloarcula marismortui (strain ATCC 43049 / DSM 3752 / JCM 8966 / VKM B-1809) (Halobacterium marismortui).